The sequence spans 1500 residues: MILRRLLLAAGSLLLASAFTSAKKADGPKITVTKFKHEPVNLFYFDDSDVVMLQDGNNGDVYVSRNAGTKWDIVDVGEMKGQAWSLMPHPMDRTKAYVLGKGGKHWVTNDQAMTWREFTVDAELSPYQLPLVFHGKDSNRVMLQGIKCSGRDCVERTYYTTDGFQTLHLLMEKGRHCAWAVSTPMFGDGLDLPKEVNDRIFCVVSGLHSQWPEDNRLLYSDRFFKDDSGIEAGLDSGRAVSGVIRTASAKRHLLAATKSRRTNELALFVTDDASGWHRAEFDGQRIEEDAYTILESTNYSLQVDVVSTDSSAMGTLFTSNSNGTYFTRNIEHTNRNRQGLVDFEKIATIQGIILVNTVKNWEDVEKSSVVEKKIVSRISFDDGRTFQPLKAGKQDLHLHSVTDATNYGRVFSSPAPGLVMGVGNTGGHLKDYSDGDLYISDDAGINWKKALSDAHKYEFGDQGSVIVAVYDEGRTNKISYSFNHGKSWEKASLPLPDDVKIRAKILTTMPDSTSLKFVLVGSAKADSDVEHYVIAIDFAEMEERTCVDPDFEKWPARLNEKQEPDCLMGHKQFYRRRKADANCFIKKKFEDPIPNFEPCKCTEEDFECDFNFIRSEDGKSCVPARSLLAPEGACKNPDDKYTGSSGFRLIPGDACIKKGGLELDKPIERVCSDTMKTPAAGEIAVEKTFFTADNYRDYFYLERTGSSRGDDETVIMITSEQEIFISRDHGKRWKRIFEAETITRIEPHRYFNDVAYFLTNSGEGWYTLDRGENFRKFKAPLPPNQDKLPALSFHPDRRDWLIWTGAEECNGSGGQCHSVAYYTTNRGAEWHFLMRYVRRCEFIKRDARGSSDKIVFCEQYEDENPSSKHLQLISSEDWFAEKKVHYNNILDFATMQEFIIVAIRGEKPQDSLSVGVSIDGKTFADAELPANVKIPIQRAYTVLESRTHAAFLHVTVNNLEDHEYGSLIKSNSNGTSYVLSLSAVNRNSRGYADFEKMQGLEGVAMANVVANVDDVEKGAAKKYRTMITHNDGAEWTLLAPPGKDSEGRAYGCSTKGGKPTKACALHLHSYTERVDPRDTYSSPGAVGIMIGTGNVGEYLTPKSSADTFITRDAGISWEEAKKGKYQWEYGDSGSIIVLVPESTPTKTLLYSLDEGRSWKEYQFSEVEMQIRDISTVPSDTSRNFLLWGNEVGQGKKPGLATVNIDFSGLKERSKQCVLNEEKPEADDYYLWEPKHPLQPNGCLFGHRAKYHRKRPEKDCYNGREIQHLDSIGDICECTRSDYECDYNYEPQTDGTCARVPGLEPLDPKLVCTEDPKAIEWYEPTGYRRIPLTKCQGGKQLNHIIAHPCPNKEEEFEKKHPRLRGIGLFFAIVIPIGLAAAVGYYVYQHWDGKFGRIRLGETGSGGFFDRDSPLISIPVTIVAGIVAVATALPLLVSSLWRSLGGYIRVPGSGSSRQPYSSRGAFAARRGDYVGVVDDEDELLGTDDLEDDEEGEERNGQV.

Positions Met-1 to Ala-22 are cleaved as a signal peptide. Residues Lys-23–Gly-1364 are Lumenal-facing. N-linked (GlcNAc...) asparagine glycosylation is found at Asn-298 and Asn-322. BNR repeat units lie at residues Ile-378–Gln-387, Tyr-438–Lys-449, Tyr-480–Lys-490, and Phe-724–Lys-734. The N-linked (GlcNAc...) asparagine glycan is linked to Asn-810. The BNR 5 repeat unit spans residues Tyr-821–His-831. An N-linked (GlcNAc...) asparagine glycan is attached at Asn-973. 2 BNR repeats span residues Phe-1108 to Glu-1118 and Tyr-1150 to Lys-1159. A helical membrane pass occupies residues Ile-1365 to Val-1385. Residues Tyr-1386 to Pro-1412 are Cytoplasmic-facing. A helical transmembrane segment spans residues Leu-1413–Leu-1433. Over Leu-1434 to Val-1500 the chain is Lumenal. Acidic residues predominate over residues Leu-1481 to Glu-1494. Residues Leu-1481–Val-1500 are disordered.

It belongs to the VPS10-related sortilin family.

The protein resides in the golgi apparatus. It is found in the trans-Golgi network membrane. Its subcellular location is the prevacuolar compartment membrane. In terms of biological role, functions as a sorting receptor in the Golgi compartment required for the intracellular sorting and delivery of soluble vacuolar proteins, like carboxypeptidase Y (CPY) and proteinase A. Executes multiple rounds of sorting by cycling between the late Golgi and a prevacuolar endosome-like compartment. This chain is Vacuolar protein sorting/targeting protein 10 (VPS10), found in Blastomyces gilchristii (strain SLH14081) (Blastomyces dermatitidis).